The sequence spans 196 residues: UPF0215 protein MA_4269 (196 aa).

The protein belongs to the UPF0215 family.

The sequence is that of UPF0215 protein MA_4269 from Methanosarcina acetivorans (strain ATCC 35395 / DSM 2834 / JCM 12185 / C2A).